Consider the following 103-residue polypeptide: Major carboxysome shell protein CsoS1 (103 aa).

The region spanning 9-94 (ALGMIETRGL…PHREVEPALG (86 aa)) is the BMC domain.

It belongs to the bacterial microcompartments protein family. CsoS1 subfamily. In terms of assembly, homohexamer with a small central pore. A CsoS1-CsoS1D-CsoS2 complex can be isolated following expression in E.coli. Forms a CsoS2-CsoS1-RuBisCO complex.

It localises to the carboxysome. Its function is as follows. The major shell protein of the carboxysome, a polyhedral inclusion where RuBisCO (ribulose bisphosphate carboxylase, ccbL-ccbS) is sequestered. Assembles into hexamers which make sheets that form the facets of the polyhedral carboxysome. There are estimated to be 538 CsoS1 hexamers per carboxysome; note this number includes the probable carboxysome shell vertex proteins CsoS4A and CsoS4B. This chain is Major carboxysome shell protein CsoS1, found in Prochlorococcus marinus subsp. pastoris (strain CCMP1986 / NIES-2087 / MED4).